Consider the following 585-residue polypeptide: CTP synthase (585 aa).

An amidoligase domain region spans residues 1-281; that stretch reads MPALRKHPHT…DAYVVRRLNL (281 aa). Serine 23 lines the CTP pocket. Serine 23 contributes to the UTP binding site. ATP-binding positions include 24–29 and aspartate 81; that span reads SLGKGL. Mg(2+) is bound by residues aspartate 81 and glutamate 155. Residues 162–164, 202–207, and lysine 238 contribute to the CTP site; these read DIE and KTKPTQ. UTP-binding positions include 202-207 and lysine 238; that span reads KTKPTQ. Residues 306 to 554 enclose the Glutamine amidotransferase type-1 domain; the sequence is RIALVGKYID…VGAAVEYNNG (249 aa). Position 369 (glycine 369) interacts with L-glutamine. Cysteine 396 functions as the Nucleophile; for glutamine hydrolysis in the catalytic mechanism. Residues 397–400, glutamate 419, and arginine 480 contribute to the L-glutamine site; that span reads LGLQ. Residues histidine 527 and glutamate 529 contribute to the active site. The disordered stretch occupies residues 564–585; sequence IPTADHQSNGAEHALEDAPARG. A compositionally biased stretch (basic and acidic residues) spans 576–585; the sequence is HALEDAPARG.

This sequence belongs to the CTP synthase family. Homotetramer.

The enzyme catalyses UTP + L-glutamine + ATP + H2O = CTP + L-glutamate + ADP + phosphate + 2 H(+). The catalysed reaction is L-glutamine + H2O = L-glutamate + NH4(+). It carries out the reaction UTP + NH4(+) + ATP = CTP + ADP + phosphate + 2 H(+). It participates in pyrimidine metabolism; CTP biosynthesis via de novo pathway; CTP from UDP: step 2/2. Allosterically activated by GTP, when glutamine is the substrate; GTP has no effect on the reaction when ammonia is the substrate. The allosteric effector GTP functions by stabilizing the protein conformation that binds the tetrahedral intermediate(s) formed during glutamine hydrolysis. Inhibited by the product CTP, via allosteric rather than competitive inhibition. In terms of biological role, catalyzes the ATP-dependent amination of UTP to CTP with either L-glutamine or ammonia as the source of nitrogen. Regulates intracellular CTP levels through interactions with the four ribonucleotide triphosphates. This chain is CTP synthase, found in Mycolicibacterium gilvum (strain PYR-GCK) (Mycobacterium gilvum (strain PYR-GCK)).